We begin with the raw amino-acid sequence, 692 residues long: Elongation factor G (692 aa).

In terms of domain architecture, tr-type G spans 8 to 282 (ENTRNIGIMA…AVLDYLPSPL (275 aa)). Residues 17 to 24 (AHIDAGKT), 81 to 85 (DTPGH), and 135 to 138 (NKMD) each bind GTP.

Belongs to the TRAFAC class translation factor GTPase superfamily. Classic translation factor GTPase family. EF-G/EF-2 subfamily.

It is found in the cytoplasm. Its function is as follows. Catalyzes the GTP-dependent ribosomal translocation step during translation elongation. During this step, the ribosome changes from the pre-translocational (PRE) to the post-translocational (POST) state as the newly formed A-site-bound peptidyl-tRNA and P-site-bound deacylated tRNA move to the P and E sites, respectively. Catalyzes the coordinated movement of the two tRNA molecules, the mRNA and conformational changes in the ribosome. This is Elongation factor G (fusA) from Halalkalibacterium halodurans (strain ATCC BAA-125 / DSM 18197 / FERM 7344 / JCM 9153 / C-125) (Bacillus halodurans).